Consider the following 403-residue polypeptide: S-adenosylmethionine synthase (403 aa).

His-16 is a binding site for ATP. Mg(2+) is bound at residue Asp-18. Position 44 (Glu-44) interacts with K(+). Positions 57 and 100 each coordinate L-methionine. Residues 100–110 are flexible loop; it reads QSSDIAQGVDR. ATP-binding positions include 165 to 167, Asp-242, 248 to 249, Ala-265, and Lys-269; these read DAK and RK. Asp-242 contacts L-methionine. Lys-273 lines the L-methionine pocket.

It belongs to the AdoMet synthase family. As to quaternary structure, homotetramer; dimer of dimers. Mg(2+) serves as cofactor. It depends on K(+) as a cofactor.

It is found in the cytoplasm. It catalyses the reaction L-methionine + ATP + H2O = S-adenosyl-L-methionine + phosphate + diphosphate. It participates in amino-acid biosynthesis; S-adenosyl-L-methionine biosynthesis; S-adenosyl-L-methionine from L-methionine: step 1/1. Its function is as follows. Catalyzes the formation of S-adenosylmethionine (AdoMet) from methionine and ATP. The overall synthetic reaction is composed of two sequential steps, AdoMet formation and the subsequent tripolyphosphate hydrolysis which occurs prior to release of AdoMet from the enzyme. This Nitrosococcus oceani (strain ATCC 19707 / BCRC 17464 / JCM 30415 / NCIMB 11848 / C-107) protein is S-adenosylmethionine synthase.